The primary structure comprises 131 residues: MHIGIDIVEVPRIAKALNRGDKGFLNAVYTAGEAAHIEQAHAGDVRAAGIWAAKEAVVKAFGVGFSEGVTFRDVEVRYTATGQPQAVLSGKLASLAVDRSLQVLSISISHTENYAAATALVGPVSAEVRPV.

Mg(2+)-binding residues include aspartate 6 and glutamate 55.

The protein belongs to the P-Pant transferase superfamily. AcpS family. Requires Mg(2+) as cofactor.

It localises to the cytoplasm. It carries out the reaction apo-[ACP] + CoA = holo-[ACP] + adenosine 3',5'-bisphosphate + H(+). In terms of biological role, transfers the 4'-phosphopantetheine moiety from coenzyme A to a Ser of acyl-carrier-protein. The chain is Holo-[acyl-carrier-protein] synthase from Verminephrobacter eiseniae (strain EF01-2).